Consider the following 206-residue polypeptide: Cytochrome c biogenesis ATP-binding export protein CcmA (206 aa).

An ABC transporter domain is found at leucine 2 to proline 206. Glycine 34–threonine 41 serves as a coordination point for ATP.

Belongs to the ABC transporter superfamily. CcmA exporter (TC 3.A.1.107) family. The complex is composed of two ATP-binding proteins (CcmA) and two transmembrane proteins (CcmB).

It is found in the cell inner membrane. The enzyme catalyses heme b(in) + ATP + H2O = heme b(out) + ADP + phosphate + H(+). Functionally, part of the ABC transporter complex CcmAB involved in the biogenesis of c-type cytochromes; once thought to export heme, this seems not to be the case, but its exact role is uncertain. Responsible for energy coupling to the transport system. This is Cytochrome c biogenesis ATP-binding export protein CcmA from Pectobacterium atrosepticum (strain SCRI 1043 / ATCC BAA-672) (Erwinia carotovora subsp. atroseptica).